The chain runs to 1034 residues: Vacuolar membrane protease (1034 aa).

Residues 1–11 (MAVKNPFGFTT) lie on the Cytoplasmic side of the membrane. The chain crosses the membrane as a helical span at residues 12–32 (GPVTFWLIVVYAAFLIPLVWI). Topologically, residues 33–418 (HESVPAVPSS…GFAILELRGL (386 aa)) are vacuolar. Asn51 and Asn141 each carry an N-linked (GlcNAc...) asparagine glycan. Zn(2+) contacts are provided by His200 and Asp212. The active-site Proton acceptor is Glu246. Zn(2+)-binding residues include Glu247, Glu272, and His345. Residues 419-439 (FAWTLTLLIVSPLVLALVTYI) traverse the membrane as a helical segment. The Cytoplasmic segment spans residues 440–470 (LSRKDKYYFFSRKVTADEDDEPVSVGGWKGF). A helical transmembrane segment spans residues 471 to 491 (FRFPFALVLSASITVLSAFLI). Topologically, residues 492 to 497 (RRVNPH) are vacuolar. Residues 498-518 (IIYSSPYAVWAMTLSLFFLVF) form a helical membrane-spanning segment. Residues 519-536 (WTIAKGASVVRPSALQRG) are Cytoplasmic-facing. A helical transmembrane segment spans residues 537–557 (YAHIWLFVISWVILVAVTAAA). Residues 558-567 (DRFKIASGYP) lie on the Vacuolar side of the membrane. A helical transmembrane segment spans residues 568–588 (FAFFHSAVFVSALISLCDLFA). At 589–703 (LPSKQEFARN…NLPSWTWFFQ (115 aa)) the chain is on the cytoplasmic side. The disordered stretch occupies residues 623 to 653 (HSHVEDDVAEEPTETTPLRSGENGNGNNGTI). Residues 704–724 (LLLLAPITITVFLQIALFIVS) traverse the membrane as a helical segment. Topologically, residues 725-736 (AIHSAAADGNDP) are vacuolar. The chain crosses the membrane as a helical span at residues 737 to 757 (ILVYAAIAAFSIIILLPATPF). At 758-762 (IHRAS) the chain is on the cytoplasmic side. The helical transmembrane segment at 763–783 (FYLPLFLLLVFFVTLIYNLVA) threads the bilayer. Residues 784–1034 (FPFSAENRLK…LVEGRKKFRA (251 aa)) are Vacuolar-facing. Residues Asn805, Asn866, and Asn879 are each glycosylated (N-linked (GlcNAc...) asparagine).

This sequence belongs to the peptidase M28 family. Requires Zn(2+) as cofactor.

The protein resides in the vacuole membrane. Its function is as follows. May be involved in vacuolar sorting and osmoregulation. This chain is Vacuolar membrane protease, found in Colletotrichum graminicola (strain M1.001 / M2 / FGSC 10212) (Maize anthracnose fungus).